A 205-amino-acid polypeptide reads, in one-letter code: Small ribosomal subunit protein uS4 (205 aa).

Positions 94 to 154 constitute an S4 RNA-binding domain; the sequence is SRLDNSVYRA…TRKDGKIRKN (61 aa).

This sequence belongs to the universal ribosomal protein uS4 family. Part of the 30S ribosomal subunit. Contacts protein S5. The interaction surface between S4 and S5 is involved in control of translational fidelity.

Functionally, one of the primary rRNA binding proteins, it binds directly to 16S rRNA where it nucleates assembly of the body of the 30S subunit. In terms of biological role, with S5 and S12 plays an important role in translational accuracy. The protein is Small ribosomal subunit protein uS4 of Mesomycoplasma hyopneumoniae (strain 232) (Mycoplasma hyopneumoniae).